The sequence spans 213 residues: Large ribosomal subunit protein uL1 (213 aa).

It belongs to the universal ribosomal protein uL1 family. As to quaternary structure, part of the 50S ribosomal subunit.

Binds directly to 23S rRNA. Probably involved in E site tRNA release. Its function is as follows. Protein L1 is also a translational repressor protein, it controls the translation of its operon by binding to its mRNA. This is Large ribosomal subunit protein uL1 from Methanosarcina mazei (strain ATCC BAA-159 / DSM 3647 / Goe1 / Go1 / JCM 11833 / OCM 88) (Methanosarcina frisia).